The primary structure comprises 256 residues: Protein FixA (256 aa).

The protein belongs to the ETF beta-subunit/FixA family. Heterodimer of FixA and FixB.

It functions in the pathway amine and polyamine metabolism; carnitine metabolism. Its function is as follows. Required for anaerobic carnitine reduction. May bring reductant to CaiA. This chain is Protein FixA, found in Escherichia coli O17:K52:H18 (strain UMN026 / ExPEC).